We begin with the raw amino-acid sequence, 435 residues long: WD repeat domain phosphoinositide-interacting protein 2 (435 aa).

The WD 1 repeat unit spans residues 182-222 (AHDSPLAALAFDASGTKLATASEKGTVIRVFSIPEGQKLFE). The L/FRRG motif motif lies at 223–226 (FRRG). WD repeat units follow at residues 228 to 267 (KRCVSICSLAFSMDSIFLSASSNTETVHIFKLETIKEKPP) and 311 to 349 (GHKNICALATIQKISRLLVGAADGYLYIYNFDPQEGGEC). A disordered region spans residues 386-435 (VTKTYPPPSPTRHAYADDLGAVGGASEEDEMGNLRLDEDNENPPMILQTE).

It belongs to the WD repeat PROPPIN family.

Its subcellular location is the preautophagosomal structure membrane. In terms of biological role, component of the autophagy machinery that controls the major intracellular degradation process by which cytoplasmic materials are packaged into autophagosomes and delivered to lysosomes for degradation. Involved in an early step of the formation of preautophagosomal structures. In Xenopus laevis (African clawed frog), this protein is WD repeat domain phosphoinositide-interacting protein 2 (wipi2).